Reading from the N-terminus, the 372-residue chain is General transcription factor IIH subunit 3 (372 aa).

Residues 40–78 (ISGMNDDNDSSSRYNGSTTIGNNNNNNNNNNSNNNNNVN) form a disordered region. The span at 50–60 (SSRYNGSTTIG) shows a compositional bias: polar residues. Over residues 61–78 (NNNNNNNNNNSNNNNNVN) the composition is skewed to low complexity. The C4-type zinc finger occupies 323-340 (CSVCLSIFCGHSSSCSTC).

It belongs to the TFB4 family. As to quaternary structure, component of the 7-subunit TFIIH core complex composed of XPB/repB, XPD/repD, gtf2h1, gtf2h2, gtf2h3, gtf2h4 and gtf2h5, which is active in NER. The core complex associates with the 3-subunit CDK-activating kinase (CAK) module composed of cycH/cyclin H, cdk7 and mnat1 to form the 10-subunit holoenzyme (holo-TFIIH) active in transcription.

The protein resides in the nucleus. Its function is as follows. Component of the general transcription and DNA repair factor IIH (TFIIH) core complex, which is involved in general and transcription-coupled nucleotide excision repair (NER) of damaged DNA and, when complexed to CAK, in RNA transcription by RNA polymerase II. In NER, TFIIH acts by opening DNA around the lesion to allow the excision of the damaged oligonucleotide and its replacement by a new DNA fragment. In transcription, TFIIH has an essential role in transcription initiation. When the pre-initiation complex (PIC) has been established, TFIIH is required for promoter opening and promoter escape. Phosphorylation of the C-terminal tail (CTD) of the largest subunit of RNA polymerase II by the kinase module CAK controls the initiation of transcription. The polypeptide is General transcription factor IIH subunit 3 (gtf2h3) (Dictyostelium discoideum (Social amoeba)).